The sequence spans 685 residues: Mannan-binding lectin serine protease 2 (685 aa).

A signal peptide spans 1–19; sequence MRLLIFLGLLWSLVATLLG. The 118-residue stretch at 20-137 folds into the CUB 1 domain; it reads SKWPEPVFGR…TGFEAFYAAE (118 aa). The Ca(2+) site is built by E67 and D75. A disulfide bond links C72 and C90. N-linked (GlcNAc...) asparagine glycosylation occurs at N103. Residues D120, S122, N123, D138, and E141 each contribute to the Ca(2+) site. One can recognise an EGF-like; calcium-binding domain in the interval 138-181; sequence DVDECRVSLGDSVPCDHYCHNYLGGYYCSCRAGYVLHQNKHTCS. 5 disulfides stabilise this stretch: C142/C156, C152/C165, C167/C180, C184/C211, and C241/C259. 2 residues coordinate Ca(2+): N158 and G162. N158 is subject to (3R)-3-hydroxyasparagine. Residues 184–296 enclose the CUB 2 domain; it reads CSGQVFTGRS…TGWKIHYTST (113 aa). N285 and N308 each carry an N-linked (GlcNAc...) asparagine glycan. 2 consecutive Sushi domains span residues 298–363 and 364–431; these read RPCP…ECSI and IDCG…VCEP. Intrachain disulfides connect C300/C348, C328/C361, C366/C411, C396/C429, C433/C552, C598/C617, and C628/C659. A Peptidase S1 domain is found at 444–683; the sequence is IVGGQPAKPG…YIPWIENIIS (240 aa). Active-site charge relay system residues include H483 and D532. A glycan (N-linked (GlcNAc...) asparagine) is linked at N545. S632 (charge relay system) is an active-site residue. N-linked (GlcNAc...) asparagine glycosylation is present at N641.

It belongs to the peptidase S1 family. In terms of assembly, homodimer; disulfide-linked. Binds MBL2. Isoform 2 binds to MASP1. Binds SERPING1. In terms of processing, the iron and 2-oxoglutarate dependent 3-hydroxylation of aspartate and asparagine is (R) stereospecific within EGF domains. Plasma.

The protein resides in the secreted. It catalyses the reaction Selective cleavage after Arg-223 in complement component C2 (-Ser-Leu-Gly-Arg-|-Lys-Ile-Gln-Ile) and after Arg-76 in complement component C4 (-Gly-Leu-Gln-Arg-|-Ala-Leu-Glu-Ile).. Functionally, serum protease that plays an important role in the activation of the complement system via mannose-binding lectin. After activation by auto-catalytic cleavage it cleaves C2 and C4, leading to their activation and to the formation of C3 convertase. This chain is Mannan-binding lectin serine protease 2 (Masp2), found in Mus musculus (Mouse).